The primary structure comprises 265 residues: Tryptophan synthase alpha chain (265 aa).

Residues Glu45 and Asp56 each act as proton acceptor in the active site.

The protein belongs to the TrpA family. In terms of assembly, tetramer of two alpha and two beta chains.

It catalyses the reaction (1S,2R)-1-C-(indol-3-yl)glycerol 3-phosphate + L-serine = D-glyceraldehyde 3-phosphate + L-tryptophan + H2O. The protein operates within amino-acid biosynthesis; L-tryptophan biosynthesis; L-tryptophan from chorismate: step 5/5. The alpha subunit is responsible for the aldol cleavage of indoleglycerol phosphate to indole and glyceraldehyde 3-phosphate. In Halalkalibacterium halodurans (strain ATCC BAA-125 / DSM 18197 / FERM 7344 / JCM 9153 / C-125) (Bacillus halodurans), this protein is Tryptophan synthase alpha chain.